A 336-amino-acid chain; its full sequence is Tyrosine recombinase XerC (336 aa).

One can recognise a Core-binding (CB) domain in the interval 14-106 (VANCRWLGEF…SVKSFYRFLL (93 aa)). One can recognise a Tyr recombinase domain in the interval 127–330 (KIPDFLSEEE…TFNRLRDAYT (204 aa)). Active-site residues include Arg183, Lys207, His282, Arg285, and His308. The active-site O-(3'-phospho-DNA)-tyrosine intermediate is Tyr317.

Belongs to the 'phage' integrase family. XerC subfamily. In terms of assembly, forms a cyclic heterotetrameric complex composed of two molecules of XerC and two molecules of XerD.

It localises to the cytoplasm. Its function is as follows. Site-specific tyrosine recombinase, which acts by catalyzing the cutting and rejoining of the recombining DNA molecules. The XerC-XerD complex is essential to convert dimers of the bacterial chromosome into monomers to permit their segregation at cell division. It also contributes to the segregational stability of plasmids. This chain is Tyrosine recombinase XerC, found in Chlorobaculum tepidum (strain ATCC 49652 / DSM 12025 / NBRC 103806 / TLS) (Chlorobium tepidum).